The primary structure comprises 414 residues: Gamma-glutamyl phosphate reductase (414 aa).

Belongs to the gamma-glutamyl phosphate reductase family.

The protein resides in the cytoplasm. It carries out the reaction L-glutamate 5-semialdehyde + phosphate + NADP(+) = L-glutamyl 5-phosphate + NADPH + H(+). It functions in the pathway amino-acid biosynthesis; L-proline biosynthesis; L-glutamate 5-semialdehyde from L-glutamate: step 2/2. Functionally, catalyzes the NADPH-dependent reduction of L-glutamate 5-phosphate into L-glutamate 5-semialdehyde and phosphate. The product spontaneously undergoes cyclization to form 1-pyrroline-5-carboxylate. The protein is Gamma-glutamyl phosphate reductase of Geobacillus kaustophilus (strain HTA426).